Consider the following 337-residue polypeptide: Prenyltransferase terC (337 aa).

Asp-111 and Asp-115 together coordinate Mg(2+).

It belongs to the FPP/GGPP synthase family. Requires Mg(2+) as cofactor.

The protein operates within secondary metabolite biosynthesis. In terms of biological role, prenyltransferase; part of the gene cluster that mediates the biosynthesis of terpendoles, indole-diterpene (IDT) mycotoxins including terpendole I, terpendole K, terpendole C, as well as the kinesin Eg5 inhibitor terpendole E. Terpendoles biosynthesis begins with the synthesis of geranylgeranyl diphosphate (GGPP) by a yet unidentified GGPP synthase. Condensation of indole-3-glycerol phosphate with GGPP by the prenyltransferase terC then forms 3-geranylgeranylindole (3-GGI), followed by epoxidation and cyclization of this intermediate (by the FAD-dependent monooxygeanse terM and the terpene cyclase terB) to form paspaline. The cytochrome monooxygenase terQ then hydroxylates paspalline at C-11 to yield terpendole E. The cytochrome monooxygenase terP converts terpendole E to 13-desoxyterpendole I, and terQ converts 13-desoxyterpendole I into terpendole I. TerF and terK are required for conversion of terpendole I to terpendole C which is further converted to terpendole K. This chain is Prenyltransferase terC, found in Tolypocladium album (Soil fungus).